The sequence spans 106 residues: Large ribosomal subunit protein bL21 (106 aa).

The protein belongs to the bacterial ribosomal protein bL21 family. Part of the 50S ribosomal subunit. Contacts protein L20.

In terms of biological role, this protein binds to 23S rRNA in the presence of protein L20. In Fervidobacterium nodosum (strain ATCC 35602 / DSM 5306 / Rt17-B1), this protein is Large ribosomal subunit protein bL21.